A 250-amino-acid chain; its full sequence is Leucyl/phenylalanyl-tRNA--protein transferase (250 aa).

The interval 1–21 is disordered; the sequence is MTPFRRPTVLGTSASAPFPPA.

The protein belongs to the L/F-transferase family.

Its subcellular location is the cytoplasm. It catalyses the reaction N-terminal L-lysyl-[protein] + L-leucyl-tRNA(Leu) = N-terminal L-leucyl-L-lysyl-[protein] + tRNA(Leu) + H(+). It carries out the reaction N-terminal L-arginyl-[protein] + L-leucyl-tRNA(Leu) = N-terminal L-leucyl-L-arginyl-[protein] + tRNA(Leu) + H(+). The catalysed reaction is L-phenylalanyl-tRNA(Phe) + an N-terminal L-alpha-aminoacyl-[protein] = an N-terminal L-phenylalanyl-L-alpha-aminoacyl-[protein] + tRNA(Phe). Its function is as follows. Functions in the N-end rule pathway of protein degradation where it conjugates Leu, Phe and, less efficiently, Met from aminoacyl-tRNAs to the N-termini of proteins containing an N-terminal arginine or lysine. The sequence is that of Leucyl/phenylalanyl-tRNA--protein transferase from Xanthomonas euvesicatoria pv. vesicatoria (strain 85-10) (Xanthomonas campestris pv. vesicatoria).